We begin with the raw amino-acid sequence, 581 residues long: MLIKSEYKPRMLPKEEQVKKPMTSNGRISFVLMAMAVLFACLIARGLYLQTVTYNFLKEQGDNRIVRTQALPATRGTVSDRNGAVLALSAPTESLFAVPKDMKEMPSAAQLERLSELVDVPVDVLRNKLEQKGKSFIWIKRQLDPKVAEEVKALGLENFVFEKELKRHYPMGNLFAHVIGFTDIDGKGQEGLELSLEDSLYGEDGAEVVLRDRQGNIVDSLDSPRNKAPQNGKDIILSLDQRIQTLAYEELNKAVEYHQAKAGTVVVLDARTGEILALANTPAYDPNRPGRADSEQRRNRAVTDMIEPGSAIKPFVIAKALDAGKTDLNERLNTQPYKIGPSPVRDTHVYPSLDVRGIMQKSSNVGTSKLSARFGAEEMYDFYHELGIGVRMHSGFPGETAGLLRNWRRWRPIEQATMSFGYGLQLSLLQLARAYTALTHDGVLLPLSFEKQAVAPQGKRIFKESTAREVRNLMVSVTEPGGTGTAGAVDGFDVGAKTGTARKFVNGRYADNKHVATFIGFAPAKNPRVIVAVTIDEPTAHGYYGGVVAGPPFKKIMGGSLNILGISPTKPLTAAAVKTPS.

A helical membrane pass occupies residues 28-48 (ISFVLMAMAVLFACLIARGLY). Ser-310 functions as the Acyl-ester intermediate in the catalytic mechanism.

The protein belongs to the transpeptidase family. FtsI subfamily.

It localises to the cell inner membrane. It catalyses the reaction Preferential cleavage: (Ac)2-L-Lys-D-Ala-|-D-Ala. Also transpeptidation of peptidyl-alanyl moieties that are N-acyl substituents of D-alanine.. The protein operates within cell wall biogenesis; peptidoglycan biosynthesis. In terms of biological role, catalyzes cross-linking of the peptidoglycan cell wall at the division septum. This Neisseria gonorrhoeae protein is Probable peptidoglycan D,D-transpeptidase PenA.